Reading from the N-terminus, the 437-residue chain is uncharacterized protein (437 aa).

Basic residues-rich tracts occupy residues 1–29 (MDTP…RHRN), 81–91 (LRGRHPRVRRV), and 101–118 (RRRH…GRNR). 2 disordered regions span residues 1–31 (MDTP…RNDH) and 77–437 (EHVP…QGTR). The span at 119 to 132 (HAGDRRAPGVDSRL) shows a compositional bias: basic and acidic residues. A compositionally biased stretch (basic residues) spans 133-142 (RQQHQHPRGR). Basic and acidic residues predominate over residues 143-164 (HASDRVQDGAHPRRQRLREQPR). A compositionally biased stretch (basic residues) spans 165–190 (HAGRPRRRQPPRRGRSRGTHRRHLRQ). Basic and acidic residues-rich tracts occupy residues 198-209 (GPDEDQAREFRG) and 217-253 (HPPT…EAGR). 2 stretches are compositionally biased toward basic residues: residues 284–293 (TVHRGGRLRG) and 324–348 (PHSR…RVRH). Positions 371-382 (DAAAYASVPAHA) are enriched in low complexity.

This is an uncharacterized protein from Haloferax lucentense (strain DSM 14919 / JCM 9276 / NCIMB 13854 / Aa 2.2) (Haloferax alicantei).